A 231-amino-acid chain; its full sequence is Octanoyl-[acyl-carrier-protein]:protein N-octanoyltransferase LIPT2, mitochondrial (231 aa).

Residues 1 to 31 (MRQPAVRLVRLGRVPYAELLGLQDRWLRRLQ) constitute a mitochondrion transit peptide. Residues 41 to 224 (GTEAGALLLC…AFKEIYKCTL (184 aa)) enclose the BPL/LPL catalytic domain. Residues 85-92 (RGGLATFH), 154-156 (AIG), and 167-169 (GLA) each bind substrate. The Acyl-thioester intermediate role is filled by Cys-185.

It belongs to the LipB family.

The protein localises to the mitochondrion. The enzyme catalyses octanoyl-[ACP] + L-lysyl-[protein] = N(6)-octanoyl-L-lysyl-[protein] + holo-[ACP] + H(+). It functions in the pathway protein modification; protein lipoylation via endogenous pathway; protein N(6)-(lipoyl)lysine from octanoyl-[acyl-carrier-protein]: step 1/2. Functionally, catalyzes the transfer of endogenously produced octanoic acid from octanoyl-acyl-carrier-protein (octanoyl-ACP) onto the lipoyl domains of lipoate-dependent enzymes such as the protein H of the glycine cleavage system (GCSH). Lipoyl-ACP can also act as a substrate although octanoyl-ACP is likely to be the physiological substrate. The polypeptide is Octanoyl-[acyl-carrier-protein]:protein N-octanoyltransferase LIPT2, mitochondrial (Homo sapiens (Human)).